The following is a 74-amino-acid chain: Anaphase-promoting complex subunit 13 (74 aa).

It belongs to the APC13 family. In terms of assembly, the APC/C is composed of at least 12 subunits.

It is found in the nucleus. It functions in the pathway protein modification; protein ubiquitination. In terms of biological role, component of the anaphase promoting complex/cyclosome (APC/C), a cell cycle-regulated E3 ubiquitin ligase that controls progression through mitosis and the G1 phase of the cell cycle. The APC/C complex acts by mediating ubiquitination and subsequent degradation of target proteins: it mainly mediates the formation of 'Lys-11'-linked polyubiquitin chains and, to a lower extent, the formation of 'Lys-48'- and 'Lys-63'-linked polyubiquitin chains. The APC/C complex catalyzes assembly of branched 'Lys-11'-/'Lys-48'-linked branched ubiquitin chains on target proteins. In Xenopus tropicalis (Western clawed frog), this protein is Anaphase-promoting complex subunit 13 (anapc13).